Here is a 379-residue protein sequence, read N- to C-terminus: uncharacterized protein (379 aa).

This is an uncharacterized protein from Sinorhizobium fredii (strain NBRC 101917 / NGR234).